The following is a 227-amino-acid chain: Germin-like protein subfamily 1 member 3 (227 aa).

A signal peptide spans 1–24; that stretch reads MKYPFQCFLAKIILLALASSFVSC. Cysteine 34 and cysteine 50 are joined by a disulfide. The 149-residue stretch at 64–212 folds into the Cupin type-1 domain; sequence SGLNIPGNTN…AFALDINIVR (149 aa). Positions 109, 111, and 116 each coordinate Mn(2+). N-linked (GlcNAc...) asparagine glycosylation occurs at asparagine 136. Histidine 160 provides a ligand contact to Mn(2+).

Belongs to the germin family. Oligomer (believed to be a pentamer but probably hexamer).

The protein resides in the secreted. It localises to the extracellular space. It is found in the apoplast. Its function is as follows. May play a role in plant defense. Probably has no oxalate oxidase activity even if the active site is conserved. This is Germin-like protein subfamily 1 member 3 from Arabidopsis thaliana (Mouse-ear cress).